We begin with the raw amino-acid sequence, 162 residues long: Tegument protein BLRF2 (162 aa).

Residues 12–43 (VKAVDMSMEDMAARLARLESENKALKQQVLRG) adopt a coiled-coil conformation. The tract at residues 121-162 (GAKGQPSPGEGTRLRESNDPNATRRARSRSRGREAKKVQISD) is disordered. Residues 151 to 162 (RGREAKKVQISD) show a composition bias toward basic and acidic residues.

Belongs to the herpesviridae BLRF2 family. As to quaternary structure, homooligomer; homooligomerizes and binds double-stranded DNA (dsDNA) cooperatively. Interacts with host CGAS.

Its subcellular location is the virion tegument. The protein resides in the host cytoplasm. In terms of biological role, plays a role in the inhibition of host innate immune system by targeting the CGAS enzymatic activity which is the principal cytosolic DNA sensor that detects invading viral DNA. Acts by inhibiting CGAS-DNA phase separation: directly binds double-stranded DNA (dsDNA) in a length dependent but sequence independent manner and is able to form DNA-induced phase separation in infected cells. DNA phase separation of ORF52 mediates disruption of liquid-like droplets in which CGAS is activated, thereby preventing CGAS activity. This Epstein-Barr virus (strain GD1) (HHV-4) protein is Tegument protein BLRF2.